The sequence spans 294 residues: Large ribosomal subunit protein uL2 (294 aa).

Disordered regions lie at residues 1–37 (MGIR…RPEK) and 228–294 (GSVM…RAAQ). A compositionally biased stretch (basic and acidic residues) spans 23-37 (ELSRDENGKRPRPEK). The segment covering 264 to 285 (KTRKRNKPSNKFIVRGRRRGGR) has biased composition (basic residues).

Belongs to the universal ribosomal protein uL2 family. As to quaternary structure, part of the 50S ribosomal subunit. Forms a bridge to the 30S subunit in the 70S ribosome.

In terms of biological role, one of the primary rRNA binding proteins. Required for association of the 30S and 50S subunits to form the 70S ribosome, for tRNA binding and peptide bond formation. It has been suggested to have peptidyltransferase activity; this is somewhat controversial. Makes several contacts with the 16S rRNA in the 70S ribosome. This is Large ribosomal subunit protein uL2 from Synechococcus sp. (strain JA-2-3B'a(2-13)) (Cyanobacteria bacterium Yellowstone B-Prime).